A 373-amino-acid chain; its full sequence is Chorismate synthase (373 aa).

The NADP(+) site is built by arginine 48 and arginine 54. FMN-binding positions include 125–127 (RSS), 248–249 (NA), glycine 288, 303–307 (KPTSS), and arginine 329.

This sequence belongs to the chorismate synthase family. Homotetramer. It depends on FMNH2 as a cofactor.

The catalysed reaction is 5-O-(1-carboxyvinyl)-3-phosphoshikimate = chorismate + phosphate. Its pathway is metabolic intermediate biosynthesis; chorismate biosynthesis; chorismate from D-erythrose 4-phosphate and phosphoenolpyruvate: step 7/7. Its function is as follows. Catalyzes the anti-1,4-elimination of the C-3 phosphate and the C-6 proR hydrogen from 5-enolpyruvylshikimate-3-phosphate (EPSP) to yield chorismate, which is the branch point compound that serves as the starting substrate for the three terminal pathways of aromatic amino acid biosynthesis. This reaction introduces a second double bond into the aromatic ring system. In Colwellia psychrerythraea (strain 34H / ATCC BAA-681) (Vibrio psychroerythus), this protein is Chorismate synthase.